A 391-amino-acid chain; its full sequence is MDCIECRGRMLCSRKVCPLMPSLRPQVSVERDILGSSPPSVFVGRYGYPKVRICPAVPPFTGDTKIYDTPEMWREVPVERVLEFRYSMILGQFRADVRRSKEVEVVQEMSLYDKPIDVEVSFAKPPSVRAFFDDVLPPFGASAPAKEVIIHSAPRPPKAVEKVYYDTDLRAVEAMSYLYERGVAVSHIQKLLSAGTLGVKRKLVPTRWAITAVDDTLSKQIIEEIKQYETIDRYRVFVLKESKNLFVAILCPSPWSYEWGEAWYPDTTWNRTRKVGVLTDSEGFFGRTTYARLGGCYYSSRLATAEYLRRIRRQATAIVWREIYPGFNVPIGVWFVREMLRKMYAGKYCEFDTLEDALRFVDKHSNLDVGRWIEKSTLVKRGRQRTLWEFM.

The C4-type zinc finger occupies 3–17 (CIECRGRMLCSRKVC). Residues 384-391 (QRTLWEFM) carry the PIP motif motif.

It belongs to the Nre family. Interacts with the DNA polymerase sliding clamp (PCNA) via the PIP (PCNA-interacting peptide) motif.

Its function is as follows. Involved in DNA damage repair. The polypeptide is DNA repair protein NreB (Archaeoglobus fulgidus (strain ATCC 49558 / DSM 4304 / JCM 9628 / NBRC 100126 / VC-16)).